The sequence spans 236 residues: Orotidine 5'-phosphate decarboxylase (236 aa).

Residues D16, K38, 65-74 (DLKYHDIPNT), T124, R185, Q194, G214, and R215 contribute to the substrate site. Catalysis depends on K67, which acts as the Proton donor.

The protein belongs to the OMP decarboxylase family. Type 1 subfamily. Homodimer.

It catalyses the reaction orotidine 5'-phosphate + H(+) = UMP + CO2. The protein operates within pyrimidine metabolism; UMP biosynthesis via de novo pathway; UMP from orotate: step 2/2. Its function is as follows. Catalyzes the decarboxylation of orotidine 5'-monophosphate (OMP) to uridine 5'-monophosphate (UMP). This chain is Orotidine 5'-phosphate decarboxylase, found in Hydrogenovibrio crunogenus (strain DSM 25203 / XCL-2) (Thiomicrospira crunogena).